The chain runs to 231 residues: Lipoprotein-releasing system ATP-binding protein LolD 2 (231 aa).

An ABC transporter domain is found at 6 to 230 (VEARSLSKSF…DGRLVGQDPA (225 aa)). 42–49 (GPSGSGKS) lines the ATP pocket.

The protein belongs to the ABC transporter superfamily. Lipoprotein translocase (TC 3.A.1.125) family. As to quaternary structure, the complex is composed of two ATP-binding proteins (LolD) and two transmembrane proteins (LolC and LolE).

The protein localises to the cell inner membrane. Functionally, part of the ABC transporter complex LolCDE involved in the translocation of mature outer membrane-directed lipoproteins, from the inner membrane to the periplasmic chaperone, LolA. Responsible for the formation of the LolA-lipoprotein complex in an ATP-dependent manner. The chain is Lipoprotein-releasing system ATP-binding protein LolD 2 from Rhodospirillum rubrum (strain ATCC 11170 / ATH 1.1.1 / DSM 467 / LMG 4362 / NCIMB 8255 / S1).